The following is a 286-amino-acid chain: Shikimate dehydrogenase (NADP(+)) (286 aa).

Residues 19 to 21 (SVS) and Thr66 contribute to the shikimate site. Lys70 serves as the catalytic Proton acceptor. Asn91 and Asp106 together coordinate shikimate. NADP(+)-binding positions include 130 to 134 (GAGGS) and Ala225. Tyr227 is a shikimate binding site. Position 248 (Gly248) interacts with NADP(+).

This sequence belongs to the shikimate dehydrogenase family. As to quaternary structure, homodimer.

The enzyme catalyses shikimate + NADP(+) = 3-dehydroshikimate + NADPH + H(+). It functions in the pathway metabolic intermediate biosynthesis; chorismate biosynthesis; chorismate from D-erythrose 4-phosphate and phosphoenolpyruvate: step 4/7. Its function is as follows. Involved in the biosynthesis of the chorismate, which leads to the biosynthesis of aromatic amino acids. Catalyzes the reversible NADPH linked reduction of 3-dehydroshikimate (DHSA) to yield shikimate (SA). The protein is Shikimate dehydrogenase (NADP(+)) of Dehalococcoides mccartyi (strain CBDB1).